The following is a 150-amino-acid chain: Deoxyuridine 5'-triphosphate nucleotidohydrolase (150 aa).

Substrate-binding positions include 70–72, N83, and 87–89; these read RSG and TID.

Belongs to the dUTPase family. Mg(2+) is required as a cofactor.

The catalysed reaction is dUTP + H2O = dUMP + diphosphate + H(+). It functions in the pathway pyrimidine metabolism; dUMP biosynthesis; dUMP from dCTP (dUTP route): step 2/2. Its function is as follows. This enzyme is involved in nucleotide metabolism: it produces dUMP, the immediate precursor of thymidine nucleotides and it decreases the intracellular concentration of dUTP so that uracil cannot be incorporated into DNA. This chain is Deoxyuridine 5'-triphosphate nucleotidohydrolase, found in Desulfotalea psychrophila (strain LSv54 / DSM 12343).